We begin with the raw amino-acid sequence, 466 residues long: Ferrochelatase-1, chloroplastic/mitochondrial (466 aa).

A compositionally biased stretch (polar residues) spans 1 to 11; the sequence is MQATALSSGFN. The disordered stretch occupies residues 1–23; it reads MQATALSSGFNPLTKRKDHRFPR. A chloroplast and mitochondrion-targeting transit peptide spans 1 to 35; it reads MQATALSSGFNPLTKRKDHRFPRSCSQRNSLSLIQ.

Belongs to the ferrochelatase family. As to expression, expressed in roots, leaves, stems and flowers. Present in both leaves and roots.

Its subcellular location is the plastid. It is found in the chloroplast membrane. The protein resides in the chloroplast thylakoid membrane. The protein localises to the mitochondrion. The enzyme catalyses heme b + 2 H(+) = protoporphyrin IX + Fe(2+). It functions in the pathway porphyrin-containing compound metabolism; protoheme biosynthesis; protoheme from protoporphyrin-IX: step 1/1. Functionally, catalyzes the last step of heme biosynthesis by inserting ferrous iron into protoporphyrin IX to produce protoheme. Produces heme for photosynthetic cytochromes, but does not seem to be involved in stress responses. May be involved in wound-induced supply of heme to defensive hemoproteins outside plastids. Regulates the expression of photosynthesis-associated nuclear genes in undeveloped chloroplasts through production of heme. This chain is Ferrochelatase-1, chloroplastic/mitochondrial, found in Arabidopsis thaliana (Mouse-ear cress).